A 45-amino-acid polypeptide reads, in one-letter code: NLR family pyrin domain-containing protein 2B (45 aa).

Expressed in all tissues tested, including spleen, lymph node, thymus, tonsil, peripheral blood leukocyte, bone marrow, liver, heart, brain, placenta, lung, skeletal muscle, kidney and pancreas.

It localises to the cytoplasm. The protein resides in the nucleus. In terms of biological role, may function as a negative regulator of NF-kappa-B by preventing RELA/p65 phosphorylation at 'Ser-536', thereby inhibiting its transcriptional activity. Through NF-kappa-B regulation may control cytokine release upon Toll-like receptors activation and therefore play a role in modulation of innate immunity. May also play a role in cell cycle progression and apoptotic process. The protein is NLR family pyrin domain-containing protein 2B of Homo sapiens (Human).